Reading from the N-terminus, the 317-residue chain is Retinol dehydrogenase 7 (317 aa).

33-57 provides a ligand contact to NADP(+); sequence FITGCDSGFGNLLARQLDRRGMRVL. S164 contacts substrate. The active-site Proton acceptor is Y176.

The protein belongs to the short-chain dehydrogenases/reductases (SDR) family.

It is found in the microsome. The protein resides in the endoplasmic reticulum. The catalysed reaction is all-trans-retinol--[retinol-binding protein] + NAD(+) = all-trans-retinal--[retinol-binding protein] + NADH + H(+). It participates in cofactor metabolism; retinol metabolism. Functionally, acts on retinol bound on cellular retinol-binding protein (CRBP). This Rattus norvegicus (Rat) protein is Retinol dehydrogenase 7.